The chain runs to 466 residues: Ribulose bisphosphate carboxylase large chain (466 aa).

Lysine 5 is modified (N6,N6,N6-trimethyllysine). Substrate-binding residues include asparagine 114 and threonine 164. Lysine 166 serves as the catalytic Proton acceptor. Lysine 168 provides a ligand contact to substrate. The Mg(2+) site is built by lysine 192, aspartate 194, and glutamate 195. Lysine 192 is modified (N6-carboxylysine). Histidine 285 functions as the Proton acceptor in the catalytic mechanism. Residues arginine 286, histidine 318, and serine 370 each coordinate substrate.

It belongs to the RuBisCO large chain family. Type I subfamily. As to quaternary structure, heterohexadecamer of 8 large chains and 8 small chains; disulfide-linked. The disulfide link is formed within the large subunit homodimers. Requires Mg(2+) as cofactor. The disulfide bond which can form in the large chain dimeric partners within the hexadecamer appears to be associated with oxidative stress and protein turnover.

The protein localises to the plastid. It localises to the chloroplast. The catalysed reaction is 2 (2R)-3-phosphoglycerate + 2 H(+) = D-ribulose 1,5-bisphosphate + CO2 + H2O. It catalyses the reaction D-ribulose 1,5-bisphosphate + O2 = 2-phosphoglycolate + (2R)-3-phosphoglycerate + 2 H(+). In terms of biological role, ruBisCO catalyzes two reactions: the carboxylation of D-ribulose 1,5-bisphosphate, the primary event in carbon dioxide fixation, as well as the oxidative fragmentation of the pentose substrate in the photorespiration process. Both reactions occur simultaneously and in competition at the same active site. The chain is Ribulose bisphosphate carboxylase large chain from Eremothamnus marlothianus.